The chain runs to 129 residues: Transcription antitermination protein NusB (129 aa).

This sequence belongs to the NusB family.

Functionally, involved in transcription antitermination. Required for transcription of ribosomal RNA (rRNA) genes. Binds specifically to the boxA antiterminator sequence of the ribosomal RNA (rrn) operons. The protein is Transcription antitermination protein NusB of Staphylococcus aureus (strain bovine RF122 / ET3-1).